The chain runs to 186 residues: Imidazole glycerol phosphate synthase subunit HisH (186 aa).

Residues 1–186 (MIAIIDYGSG…KLLRNFGELA (186 aa)) form the Glutamine amidotransferase type-1 domain. The active-site Nucleophile is the cysteine 72. Residues histidine 167 and glutamate 169 contribute to the active site.

In terms of assembly, heterodimer of HisH and HisF.

The protein resides in the cytoplasm. The enzyme catalyses 5-[(5-phospho-1-deoxy-D-ribulos-1-ylimino)methylamino]-1-(5-phospho-beta-D-ribosyl)imidazole-4-carboxamide + L-glutamine = D-erythro-1-(imidazol-4-yl)glycerol 3-phosphate + 5-amino-1-(5-phospho-beta-D-ribosyl)imidazole-4-carboxamide + L-glutamate + H(+). The catalysed reaction is L-glutamine + H2O = L-glutamate + NH4(+). The protein operates within amino-acid biosynthesis; L-histidine biosynthesis; L-histidine from 5-phospho-alpha-D-ribose 1-diphosphate: step 5/9. Functionally, IGPS catalyzes the conversion of PRFAR and glutamine to IGP, AICAR and glutamate. The HisH subunit catalyzes the hydrolysis of glutamine to glutamate and ammonia as part of the synthesis of IGP and AICAR. The resulting ammonia molecule is channeled to the active site of HisF. The sequence is that of Imidazole glycerol phosphate synthase subunit HisH from Picrophilus torridus (strain ATCC 700027 / DSM 9790 / JCM 10055 / NBRC 100828 / KAW 2/3).